The following is a 442-amino-acid chain: Vacuolar zinc transporter ZRC1 (442 aa).

At 1 to 8 the chain is on the cytoplasmic side; that stretch reads MITGKELR. Residues 9-29 form a helical membrane-spanning segment; sequence IISLLTLDTVFFLLEITIGYM. The Vacuolar segment spans residues 30-32; that stretch reads SHS. Residues 33 to 53 traverse the membrane as a helical segment; it reads LALIADSFHMLNDIISLLVAL. Residues 54 to 75 are Cytoplasmic-facing; that stretch reads WAVDVAKNRGPDAKYTYGWKRA. Residues 76 to 96 form a helical membrane-spanning segment; sequence EILGALINAVFLIALCFSIMI. At 97 to 112 the chain is on the vacuolar side; that stretch reads EALQRLIEPQEIQNPR. The chain crosses the membrane as a helical span at residues 113-133; it reads LVLYVGVAGLISNVVGLFLFH. Residues 134–235 are Cytoplasmic-facing; it reads DHGSDSLHSH…GHRSLNMHGV (102 aa). 3 short sequence motifs (histidine repeat) span residues 141–145, 163–167, and 216–220; these read HSHSH and HDHSH. Disordered stretches follow at residues 141-170 and 208-227; these read HSHSHGSVESGNNDLDIESNATHSHSHASL and QPLLNHDDHDHSHESKKPGH. The span at 149 to 170 shows a compositional bias: polar residues; the sequence is ESGNNDLDIESNATHSHSHASL. The span at 212–224 shows a compositional bias: basic and acidic residues; it reads NHDDHDHSHESKK. A helical transmembrane segment spans residues 236–256; the sequence is FLHVLGDALGNIGVIAAALFI. The Vacuolar portion of the chain corresponds to 257-265; the sequence is WKTEYSWRY. The helical transmembrane segment at 266 to 286 threads the bilayer; the sequence is YSDPIVSLIITIIIFSSALPL. The Cytoplasmic segment spans residues 287–442; that stretch reads SRRASRILLQ…AVNCNTSNCL (156 aa). Residue lysine 357 forms a Glycyl lysine isopeptide (Lys-Gly) (interchain with G-Cter in ubiquitin) linkage. Serine 387, serine 393, and serine 397 each carry phosphoserine. A disordered region spans residues 391–419; the sequence is GGSPSSSQEAFDSHGNTEHGRKKRSPTAY.

Belongs to the cation diffusion facilitator (CDF) transporter (TC 2.A.4) family. SLC30A subfamily.

The protein localises to the vacuole membrane. It catalyses the reaction Zn(2+)(in) = Zn(2+)(out). Its function is as follows. Vacuolar transporter that regulates zinc homeostasis by mediating zinc transport and storage into the vacuole. ZRC1 senses zinc availability in the cytosol, which might be performed through the histidine repeat motifs, and transports zinc from the cytosol to the vacuole if zinc in cytosol is abundant, conferring resistance to zinc toxicity. Plays a role in resistance to zinc shock resulting from sudden influx of zinc into cytoplasm when ZRT1 and ZRT2 are induced in response to zinc depletion. The sequence is that of Vacuolar zinc transporter ZRC1 from Saccharomyces cerevisiae (strain ATCC 204508 / S288c) (Baker's yeast).